Reading from the N-terminus, the 266-residue chain is MMSSAPETFSLDHLSQHQQQQPPPLAEQEQLCYVHCNFCDTILAVGVPCSSLFKTVTVRCGHCANLLSVNLRGLLLPAAASTANQLPFGQALLSPTSPHGLLDEVPSFQAPASLMTEQASPNVSSITSSNSSCANNAPATSMASAANKATQREPQQPKNAPSANRTSEKRQRVPSAYNRFIKDEIQRIKASNPDITHREAFSAAAKNWAHFPHIHFGLMPDQGLKKTGIQSQDGAGECMLFKDGLYAAAAAAAAATAASSMGVTPF.

The tract at residues Met1–Pro22 is disordered. The segment at Cys36–Cys63 adopts a C4-type zinc-finger fold. A compositionally biased stretch (low complexity) spans Ala119–Ser141. Residues Ala119–Pro174 are disordered. Positions Met142–Arg165 are enriched in polar residues.

The protein belongs to the YABBY family.

The protein localises to the nucleus. Functionally, may be involved in leaf cell growth and differentiation, rather than abaxial cell fate determination. This Oryza sativa subsp. indica (Rice) protein is Protein YABBY 5 (YAB5).